Reading from the N-terminus, the 557-residue chain is Potassium-transporting ATPase potassium-binding subunit (557 aa).

Helical transmembrane passes span 5–25 (GFLLIATFLLVLMVLARPLGS), 63–83 (LCAILGLNMLGLAVLFFMLLG), 132–152 (GLTVQNFLSAASGIAVIFAFI), 170–190 (LLRITLWVLVPVALLIALFLI), 253–273 (FVQMLAIFLIPTALCFAFGEV), 283–303 (LLWAMSVIFVICVGVVMWAEV), 329–349 (VLVSSLFAVVTTAASCGAVIA), 356–376 (ALGGMVPMWLMQIGEVVFGGV), 379–399 (GLYGMMLFVLLAVFIAGLMIG), 416–436 (LTALAILVTPTLVLMGAALAM), 484–504 (LLAFCMFVGRFGVIIPVMAIA), and 526–546 (LFVGLLIGTVLLVGALTFIPA).

It belongs to the KdpA family. As to quaternary structure, the system is composed of three essential subunits: KdpA, KdpB and KdpC.

The protein resides in the cell inner membrane. Part of the high-affinity ATP-driven potassium transport (or Kdp) system, which catalyzes the hydrolysis of ATP coupled with the electrogenic transport of potassium into the cytoplasm. This subunit binds the periplasmic potassium ions and delivers the ions to the membrane domain of KdpB through an intramembrane tunnel. This is Potassium-transporting ATPase potassium-binding subunit from Shigella boydii serotype 18 (strain CDC 3083-94 / BS512).